Here is a 961-residue protein sequence, read N- to C-terminus: Endochitinase A (961 aa).

The N-terminal stretch at 1 to 21 (MAPKLFTFVSALSGLASLASA) is a signal peptide. The GH18 domain maps to 28 to 339 (SNIAVYYGQG…EKIREILYDL (312 aa)). Glu175 functions as the Proton donor in the catalytic mechanism. Disordered stretches follow at residues 338-720 (DLDP…TTTE), 767-787 (TDVP…TADI), 813-842 (PPAT…GEVS), and 912-933 (HVPV…ASPT). A compositionally biased stretch (pro residues) spans 342–355 (NHPPPTTSPTPTPT). Composition is skewed to low complexity over residues 356–510 (PSTT…STSS), 519–544 (SSTS…PVIS), 552–604 (TSSS…PETT), and 612–635 (TPGS…PATS). The span at 636-665 (GGHTETSTVSTSSANQTPSASTSKPLIPTN) shows a compositional bias: polar residues. Positions 666 to 720 (SASSTSTGSVTSTPSAPGVPSSSAGSDETATTSTTDSEPTSTSSGSVTAKPTTTE) are enriched in low complexity. Gly936 carries GPI-anchor amidated glycine lipidation. Positions 937-961 (AGSRYDVVKGVPALVALALSLLAVL) are cleaved as a propeptide — removed in mature form.

Belongs to the glycosyl hydrolase 18 family. Chitinase class III subfamily. In terms of processing, O-glycosylated but not N-glycosylated.

The protein resides in the cell membrane. The protein localises to the secreted. Its subcellular location is the cell wall. It is found in the cell tip. It catalyses the reaction Random endo-hydrolysis of N-acetyl-beta-D-glucosaminide (1-&gt;4)-beta-linkages in chitin and chitodextrins.. Its function is as follows. GPI-anchored chitinase involved in the degradation of chitin, a component of the cell walls of fungi and exoskeletal elements of some animals (including worms and arthropods). Required to reshape the cell wall at the sites where cell wall remodeling and/or cell wall maturation actively take place such as sites of conidia formation. The sequence is that of Endochitinase A (chiA) from Emericella nidulans (Aspergillus nidulans).